We begin with the raw amino-acid sequence, 109 residues long: Nucleoid-associated protein VV2410 (109 aa).

The tract at residues 1–22 (MFGKGGMGNLMKQAQQMQERMQ) is disordered.

This sequence belongs to the YbaB/EbfC family. Homodimer.

The protein localises to the cytoplasm. It is found in the nucleoid. Binds to DNA and alters its conformation. May be involved in regulation of gene expression, nucleoid organization and DNA protection. The protein is Nucleoid-associated protein VV2410 of Vibrio vulnificus (strain YJ016).